The sequence spans 364 residues: Chaperone protein DnaJ (364 aa).

The J domain occupies 4 to 69; sequence DYYEILGLSK…NKKAKYDRFG (66 aa). The CR-type zinc-finger motif lies at 135-213; that stretch reads GYKNNINITR…CKGKGSLTKQ (79 aa). Zn(2+) is bound by residues Cys-148, Cys-151, Cys-165, Cys-168, Cys-187, Cys-190, Cys-201, and Cys-204. CXXCXGXG motif repeat units follow at residues 148–155, 165–172, 187–194, and 201–208; these read CDSCLGKK, CNMCNGSG, CSKCYGEG, and CKSCKGKG.

Belongs to the DnaJ family. Homodimer. It depends on Zn(2+) as a cofactor.

It localises to the cytoplasm. In terms of biological role, participates actively in the response to hyperosmotic and heat shock by preventing the aggregation of stress-denatured proteins and by disaggregating proteins, also in an autonomous, DnaK-independent fashion. Unfolded proteins bind initially to DnaJ; upon interaction with the DnaJ-bound protein, DnaK hydrolyzes its bound ATP, resulting in the formation of a stable complex. GrpE releases ADP from DnaK; ATP binding to DnaK triggers the release of the substrate protein, thus completing the reaction cycle. Several rounds of ATP-dependent interactions between DnaJ, DnaK and GrpE are required for fully efficient folding. Also involved, together with DnaK and GrpE, in the DNA replication of plasmids through activation of initiation proteins. The polypeptide is Chaperone protein DnaJ (Borreliella burgdorferi (strain ATCC 35210 / DSM 4680 / CIP 102532 / B31) (Borrelia burgdorferi)).